We begin with the raw amino-acid sequence, 276 residues long: MFVPFLIILREGLEAALIVSLIASYLTRTQRGRWIGVMWIGVLLAAALCLGLGIFINETTGEFPQKEQELFEGIVAVIAVVILTWMVFWMRKVSRNVKVQLEQAVDSALQRGNHHGWALVMMVFFAVAREGLESVFFLLAAFQQDVGIWPPLGAMLGLATAVVLGFLLYWGGIRLNLGAFFKWTSLFILFVAAGLAAGAIRAFHEAGLWNHFQEIAFDMSAVLSTHSLFGTLMEGIFGYQEAPSVSEVAVWFIYLIPALVAFVLPPRAGATASRSM.

Position 1 (M1) is a topological domain, periplasmic. The helical transmembrane segment at F2–I22 threads the bilayer. Residues A23–W34 lie on the Cytoplasmic side of the membrane. A helical transmembrane segment spans residues I35–F55. The Periplasmic segment spans residues I56 to E69. A helical transmembrane segment spans residues L70–M90. Over R91–A118 the chain is Cytoplasmic. The helical transmembrane segment at L119–L139 threads the bilayer. Residues A140–G147 lie on the Periplasmic side of the membrane. A helical transmembrane segment spans residues I148 to L168. The Cytoplasmic portion of the chain corresponds to Y169–A179. The chain crosses the membrane as a helical span at residues F180 to I200. The Periplasmic portion of the chain corresponds to R201 to S244. The helical transmembrane segment at V245–P265 threads the bilayer. Topologically, residues P266–M276 are cytoplasmic.

The protein belongs to the oxidase-dependent Fe transporter (OFeT) (TC 9.A.10.1) family. Part of a ferrous iron transporter composed of EfeU, EfeO and EfeB.

It is found in the cell inner membrane. Uptake of Fe(2+) ions across the membrane. This is Ferrous iron permease EfeU (efeU) from Escherichia coli O6:H1 (strain CFT073 / ATCC 700928 / UPEC).